Reading from the N-terminus, the 33-residue chain is Mu-theraphotoxin-Tp1a (33 aa).

3 cysteine pairs are disulfide-bonded: cysteine 2/cysteine 17, cysteine 9/cysteine 22, and cysteine 16/cysteine 29. Isoleucine 33 carries the isoleucine amide modification.

This sequence belongs to the neurotoxin 10 (Hwtx-1) family. 55 (ProTx-III) subfamily. As to expression, expressed by the venom gland.

The protein localises to the secreted. In terms of biological role, inhibits voltage-gated sodium channels without significantly altering the voltage dependence of activation or inactivation. Preferentially inhibits human Nav1.7/SCN9A (IC(50)=2.1 nM) &gt; human Nav1.6/SCN8A &gt; human Nav1.2/SCN2A &gt; human Nav1.1/SCN1A &gt; human Nav1.3/SCN3A channels. Exhibits analgesic properties by reversing spontaneous pain induced in mice by intraplantar injection with OD1 (AC P84646), a scorpion toxin that potentiates human Nav1.7/SCN9A. This is Mu-theraphotoxin-Tp1a from Thrixopelma pruriens (Peruvian green velvet tarantula).